A 485-amino-acid chain; its full sequence is Adenosylhomocysteinase (485 aa).

Substrate contacts are provided by Thr60, Asp146, and Glu208. 209–211 (TTT) contributes to the NAD(+) binding site. Substrate-binding residues include Lys238 and Asp242. NAD(+) contacts are provided by residues Asn243, 272–277 (GYGDVG), Glu295, Asn330, 351–353 (IGH), and Asn399.

This sequence belongs to the adenosylhomocysteinase family. Requires NAD(+) as cofactor.

The protein localises to the cytoplasm. The enzyme catalyses S-adenosyl-L-homocysteine + H2O = L-homocysteine + adenosine. It participates in amino-acid biosynthesis; L-homocysteine biosynthesis; L-homocysteine from S-adenosyl-L-homocysteine: step 1/1. Its function is as follows. May play a key role in the regulation of the intracellular concentration of adenosylhomocysteine. The protein is Adenosylhomocysteinase of Streptomyces griseus subsp. griseus (strain JCM 4626 / CBS 651.72 / NBRC 13350 / KCC S-0626 / ISP 5235).